A 553-amino-acid chain; its full sequence is Sensitive to high expression protein 9 homolog, mitochondrial (553 aa).

Positions 61–174 are disordered; the sequence is FFSTQPPKDT…TAQPELPSRT (114 aa). Over residues 62-84 the composition is skewed to polar residues; sequence FSTQPPKDTPENMNNKETGSSNV. Positions 103-116 are enriched in basic and acidic residues; sequence AKEDTTDATNKSET. Low complexity predominate over residues 133–160; the sequence is SDVSSASTSDSANSSETTTTTSETTPEN. Coiled-coil stretches lie at residues 210-241 and 277-309; these read SAIE…HNYK and RLDH…DLNA. A helical membrane pass occupies residues 331–351; that stretch reads WGTWGLMGVNVLLFLVLQFVA. The Mitochondrial intermembrane segment spans residues 352–523; the sequence is EPWRRKRLMK…RIDLKMRDVS (172 aa). Disordered stretches follow at residues 408 to 428 and 443 to 497; these read ALAS…RTEG and AEEA…QTLS. Composition is skewed to low complexity over residues 443–473 and 484–495; these read AEEA…QTPE and TWKQTAQKWQQT. Residues 524-544 traverse the membrane as a helical segment; sequence LLALESAATGAAVVASVAFFV. Residues 545-553 lie on the Mitochondrial matrix side of the membrane; it reads LRSSGSGKA.

Belongs to the SHE9 family. As to quaternary structure, homooligomer.

The protein localises to the mitochondrion inner membrane. Required for the maintenance of the structure of the mitochondrial inner membrane. Involved in mitochondrial morphology. Causes growth arrest when highly overexpressed. The polypeptide is Sensitive to high expression protein 9 homolog, mitochondrial (she-9) (Neurospora crassa (strain ATCC 24698 / 74-OR23-1A / CBS 708.71 / DSM 1257 / FGSC 987)).